An 823-amino-acid polypeptide reads, in one-letter code: Putative E3 ubiquitin-protein ligase RF4 (823 aa).

Disordered stretches follow at residues 24–72, 224–291, and 432–464; these read TVSP…NGSV, SKLS…CSGS, and ESVTLIPSASEKKSDSSIPSTSEKKSGSESEEK. Residues 61-72 show a composition bias toward polar residues; it reads KPQNHLSGNGSV. The segment covering 224–240 has biased composition (low complexity); it reads SKLSDSESLGAESNPPK. Over residues 267-282 the composition is skewed to polar residues; it reads FPNTPNSKKTQSSGTT. Basic and acidic residues predominate over residues 453–464; it reads SEKKSGSESEEK. A coiled-coil region spans residues 536-738; sequence ELKALRKERE…ELKLKSDYSR (203 aa). The RING-type zinc finger occupies 768–808; the sequence is CVMCLSEEMSVIFLPCAHQVLCFKCNQLHEKEGMMDCPSCR.

Belongs to the RING-type zinc finger family.

It carries out the reaction S-ubiquitinyl-[E2 ubiquitin-conjugating enzyme]-L-cysteine + [acceptor protein]-L-lysine = [E2 ubiquitin-conjugating enzyme]-L-cysteine + N(6)-ubiquitinyl-[acceptor protein]-L-lysine.. Its pathway is protein modification; protein ubiquitination. In Arabidopsis thaliana (Mouse-ear cress), this protein is Putative E3 ubiquitin-protein ligase RF4 (RF4).